Reading from the N-terminus, the 644-residue chain is Exoribonuclease 2 (644 aa).

Residues 189–516 (RQDLTALNFV…NHRLLKAVIK (328 aa)) form the RNB domain. One can recognise an S1 motif domain in the interval 561–643 (NTRFAAEIID…ETRSIIARPA (83 aa)).

This sequence belongs to the RNR ribonuclease family. RNase II subfamily.

It localises to the cytoplasm. It catalyses the reaction Exonucleolytic cleavage in the 3'- to 5'-direction to yield nucleoside 5'-phosphates.. Its function is as follows. Involved in mRNA degradation. Hydrolyzes single-stranded polyribonucleotides processively in the 3' to 5' direction. This chain is Exoribonuclease 2, found in Salmonella choleraesuis (strain SC-B67).